The chain runs to 149 residues: MADQLTDDQISEFKEAFSLFDKDGDGCITTKELGTVMRSLGQNPTEAELQDMINEVDADGNGTIDFPEFLNLMARKMKDTDSEEELKEAFRVFDKDQNGFISAAELRHVMTNLGEKLTDEEVDEMIREADVDGDGQINYDEFVKVMMAK.

Residue A2 is modified to N-acetylalanine. EF-hand domains follow at residues 8–43 (DQIS…LGQN), 44–79 (PTEA…KMKD), 81–116 (DSEE…LGEK), and 117–149 (LTDE…MMAK). Residues D21, D23, D25, C27, E32, D57, D59, N61, T63, E68, D94, D96, N98, and E105 each contribute to the Ca(2+) site. At K116 the chain carries N6,N6,N6-trimethyllysine. Ca(2+)-binding residues include D130, D132, D134, Q136, and E141.

It belongs to the calmodulin family.

Calmodulin mediates the control of a large number of enzymes, ion channels and other proteins by Ca(2+). Among the enzymes to be stimulated by the calmodulin-Ca(2+) complex are a number of protein kinases and phosphatases. This is Calmodulin (CCM1) from Capsicum annuum (Capsicum pepper).